The following is a 252-amino-acid chain: Imidazole glycerol phosphate synthase subunit HisF (252 aa).

Catalysis depends on residues Asp-11 and Asp-130.

This sequence belongs to the HisA/HisF family. In terms of assembly, heterodimer of HisH and HisF.

Its subcellular location is the cytoplasm. The catalysed reaction is 5-[(5-phospho-1-deoxy-D-ribulos-1-ylimino)methylamino]-1-(5-phospho-beta-D-ribosyl)imidazole-4-carboxamide + L-glutamine = D-erythro-1-(imidazol-4-yl)glycerol 3-phosphate + 5-amino-1-(5-phospho-beta-D-ribosyl)imidazole-4-carboxamide + L-glutamate + H(+). It functions in the pathway amino-acid biosynthesis; L-histidine biosynthesis; L-histidine from 5-phospho-alpha-D-ribose 1-diphosphate: step 5/9. IGPS catalyzes the conversion of PRFAR and glutamine to IGP, AICAR and glutamate. The HisF subunit catalyzes the cyclization activity that produces IGP and AICAR from PRFAR using the ammonia provided by the HisH subunit. The polypeptide is Imidazole glycerol phosphate synthase subunit HisF (Bacillus mycoides (strain KBAB4) (Bacillus weihenstephanensis)).